Consider the following 61-residue polypeptide: Small ribosomal subunit protein uS14B (61 aa).

Positions 24, 27, 40, and 43 each coordinate Zn(2+).

Belongs to the universal ribosomal protein uS14 family. Zinc-binding uS14 subfamily. In terms of assembly, part of the 30S ribosomal subunit. Contacts proteins S3 and S10. It depends on Zn(2+) as a cofactor.

Binds 16S rRNA, required for the assembly of 30S particles and may also be responsible for determining the conformation of the 16S rRNA at the A site. This chain is Small ribosomal subunit protein uS14B, found in Saccharopolyspora erythraea (strain ATCC 11635 / DSM 40517 / JCM 4748 / NBRC 13426 / NCIMB 8594 / NRRL 2338).